Here is a 563-residue protein sequence, read N- to C-terminus: Autophagy-related protein 18 (563 aa).

3 WD repeats span residues 36–74 (KTDDSVNFITFNQDASCIAVGLNNGYKIFNCKPKFGKCY), 247–287 (AHKS…KLFQ), and 292–331 (TYSTKIYSLSFSSDNNYVVATSSSETVHIFRLGESEALEN). The L/FRRG motif signature appears at 288-292 (FRRGT). Residues 329–430 (LENKHKKKKA…SSQAAKNEPL (102 aa)) form a disordered region. Positions 366-393 (TQDDDEFADDGDDSDEAVEGDDNDDESL) are enriched in acidic residues. The segment covering 404 to 417 (SQGSSNSFASFNSG) has biased composition (low complexity).

Belongs to the WD repeat PROPPIN family. Component of the PI(3,5)P2 regulatory complex.

Its subcellular location is the preautophagosomal structure membrane. It is found in the vacuole membrane. The protein resides in the endosome membrane. The PI(3,5)P2 regulatory complex regulates both the synthesis and turnover of phosphatidylinositol 3,5-bisphosphate (PtdIns(3,5)P2). Necessary for proper vacuole morphology. Plays an important role in osmotically-induced vacuole fragmentation. Required for cytoplasm to vacuole transport (Cvt) vesicle formation, pexophagy and starvation-induced autophagy. Involved in correct ATG9 trafficking to the pre-autophagosomal structure. Might also be involved in premeiotic DNA replication. In Scheffersomyces stipitis (strain ATCC 58785 / CBS 6054 / NBRC 10063 / NRRL Y-11545) (Yeast), this protein is Autophagy-related protein 18 (ATG18).